The following is a 167-amino-acid chain: 6,7-dimethyl-8-ribityllumazine synthase (167 aa).

Residues phenylalanine 24, 58-60, and 82-84 contribute to the 5-amino-6-(D-ribitylamino)uracil site; these read ALE and AVV. A (2S)-2-hydroxy-3-oxobutyl phosphate-binding site is contributed by 87–88; that stretch reads ET. The active-site Proton donor is the histidine 90. Asparagine 115 is a 5-amino-6-(D-ribitylamino)uracil binding site. A (2S)-2-hydroxy-3-oxobutyl phosphate-binding site is contributed by arginine 129.

It belongs to the DMRL synthase family.

It catalyses the reaction (2S)-2-hydroxy-3-oxobutyl phosphate + 5-amino-6-(D-ribitylamino)uracil = 6,7-dimethyl-8-(1-D-ribityl)lumazine + phosphate + 2 H2O + H(+). The protein operates within cofactor biosynthesis; riboflavin biosynthesis; riboflavin from 2-hydroxy-3-oxobutyl phosphate and 5-amino-6-(D-ribitylamino)uracil: step 1/2. In terms of biological role, catalyzes the formation of 6,7-dimethyl-8-ribityllumazine by condensation of 5-amino-6-(D-ribitylamino)uracil with 3,4-dihydroxy-2-butanone 4-phosphate. This is the penultimate step in the biosynthesis of riboflavin. This chain is 6,7-dimethyl-8-ribityllumazine synthase, found in Cupriavidus pinatubonensis (strain JMP 134 / LMG 1197) (Cupriavidus necator (strain JMP 134)).